Here is a 1141-residue protein sequence, read N- to C-terminus: DNA-directed RNA polymerase subunit beta (1141 aa).

The protein belongs to the RNA polymerase beta chain family. The RNAP catalytic core consists of 2 alpha, 1 beta, 1 beta' and 1 omega subunit. When a sigma factor is associated with the core the holoenzyme is formed, which can initiate transcription.

It catalyses the reaction RNA(n) + a ribonucleoside 5'-triphosphate = RNA(n+1) + diphosphate. DNA-dependent RNA polymerase catalyzes the transcription of DNA into RNA using the four ribonucleoside triphosphates as substrates. This Frankia alni (strain DSM 45986 / CECT 9034 / ACN14a) protein is DNA-directed RNA polymerase subunit beta.